The following is a 317-amino-acid chain: Acetylglutamate kinase (317 aa).

Substrate is bound by residues 70 to 71 (GG), Arg-92, and Asn-191.

Belongs to the acetylglutamate kinase family. ArgB subfamily.

Its subcellular location is the cytoplasm. It carries out the reaction N-acetyl-L-glutamate + ATP = N-acetyl-L-glutamyl 5-phosphate + ADP. Its pathway is amino-acid biosynthesis; L-arginine biosynthesis; N(2)-acetyl-L-ornithine from L-glutamate: step 2/4. Functionally, catalyzes the ATP-dependent phosphorylation of N-acetyl-L-glutamate. The sequence is that of Acetylglutamate kinase from Corynebacterium glutamicum (strain R).